Here is a 186-residue protein sequence, read N- to C-terminus: HTH-type transcriptional regulator Hpr (186 aa).

An HTH marR-type domain is found at 13–157; it reads AMLYSQRIAQ…VMAVIRNIYG (145 aa). Residues 63–86 constitute a DNA-binding region (H-T-H motif); the sequence is ISDVAKFGVMHVSTAFNFSKKLEE.

In terms of assembly, homodimer.

In terms of biological role, negative regulator of protease production and sporulation. This is HTH-type transcriptional regulator Hpr from Lysinibacillus sphaericus (strain C3-41).